Here is a 207-residue protein sequence, read N- to C-terminus: Probable glutathione S-transferase 5 (207 aa).

The GST N-terminal domain occupies 2 to 81 (VSYKLTYFNG…FLAREFKLNG (80 aa)). Residues tyrosine 8, tryptophan 39, lysine 43, 51-53 (GQL), and 65-66 (QS) contribute to the glutathione site. In terms of domain architecture, GST C-terminal spans 83–207 (TAWEEAQVNS…WIETRPVTPF (125 aa)).

Belongs to the GST superfamily. Sigma family.

It carries out the reaction RX + glutathione = an S-substituted glutathione + a halide anion + H(+). Functionally, conjugation of reduced glutathione to a wide number of exogenous and endogenous hydrophobic electrophiles. May play a role in the detoxification of reactive oxygen species produced during pathogenic bacterial infection. In Caenorhabditis elegans, this protein is Probable glutathione S-transferase 5 (gst-5).